Here is a 566-residue protein sequence, read N- to C-terminus: Myo-inositol transporter 1A (566 aa).

The Cytoplasmic segment spans residues 1–64 (MSDEKNYGIS…ERTEKLTKFV (64 aa)). The chain crosses the membrane as a helical span at residues 65 to 85 (VGLALFASVSGFCFGFDTGVI). The Extracellular portion of the chain corresponds to 86 to 106 (SAALVSIKDDFGHILDDTEKE). The chain crosses the membrane as a helical span at residues 107–127 (WISAATSCGALVGALSSGALA). Over 128 to 140 (DRVGRKWTLAVGD) the chain is Cytoplasmic. A helical transmembrane segment spans residues 141-161 (VWFTLGAIIICSSFSVVQMIV). At 162–163 (GR) the chain is on the extracellular side. Residues 164–184 (AVLGLGVGTAAAIAPLYIAEV) form a helical membrane-spanning segment. Topologically, residues 185-192 (APTRFRGA) are cytoplasmic. The helical transmembrane segment at 193–213 (LVTVQSIAITGGQFFSYCIGI) threads the bilayer. Residues 214 to 222 (PLTGHNGWR) are Extracellular-facing. A helical transmembrane segment spans residues 223-243 (IQFAIGIVPAVVQAAVVHFLP). The Cytoplasmic segment spans residues 244-313 (ESPRYDLLRG…VLTEGKYRKP (70 aa)). The helical transmembrane segment at 314–334 (AITALGIGIFQQLCGFNSLMY) threads the bilayer. Over 335–349 (YAATIFSYAGFDNPT) the chain is Extracellular. Residues 350–370 (SVGLIVSGTNWFFTFVAMMIL) form a helical membrane-spanning segment. At 371–377 (DRVGKRR) the chain is on the cytoplasmic side. Residues 378–398 (ILLSTYPGMIAGLALASVAFW) traverse the membrane as a helical segment. Residues 399–421 (KMTGSTGHRLVEGTEYPQQWSNM) lie on the Extracellular side of the membrane. The helical transmembrane segment at 422-442 (MLGMMVVFIAFYATGSGNITW) threads the bilayer. The Cytoplasmic portion of the chain corresponds to 443–458 (TVGEMFPLEMRGIGAS). Residues 459 to 479 (ILAGGVWAANIVISATFLTLM) traverse the membrane as a helical segment. The Extracellular segment spans residues 480-485 (NAIGPT). Residues 486–506 (PTFALYAGICLAGLIFIYFCY) form a helical membrane-spanning segment. Residues 507 to 566 (PEPSGLSLEEIQIIYNYGFGVQKSREIRAEHKLKAQEMRDRANSHIGGSATASDDQLNKV) lie on the Cytoplasmic side of the membrane. A disordered region spans residues 546–566 (DRANSHIGGSATASDDQLNKV). Residues 556–566 (ATASDDQLNKV) show a composition bias toward polar residues.

This sequence belongs to the major facilitator superfamily. Sugar transporter (TC 2.A.1.1) family.

It localises to the cell membrane. It catalyses the reaction myo-inositol(out) + H(+)(out) = myo-inositol(in) + H(+)(in). Functionally, major transporter for myo-inositol. Plays a role in the traversal of the host blood-brain barrier. This chain is Myo-inositol transporter 1A, found in Cryptococcus neoformans var. grubii serotype A (strain H99 / ATCC 208821 / CBS 10515 / FGSC 9487) (Filobasidiella neoformans var. grubii).